Here is a 648-residue protein sequence, read N- to C-terminus: MVGFIGSVLIKLIEFEVPFIDCLYIGYSALTTTGLVTVDISGWSSGTLFLLVILVQLGSTVLLTLPIVLLRRFFIRSVYSNSSIISAANASPDLISTIIHSHLPHHDFKDDDDENDNNNNEENDDNDDESYQHNNNNNEEHDDNDIEIGGILKLDSPIDHNLPNGFQDDNAPHHYNIPIVGKIDKKSRKFSLDSPSSPIIQQQQQQQQQQQQQQQQQQQQQQQQQQQPSTTTTTTTTTNSTLNKSTNNSTNNNNNTNDSQSIQKEVNIDINRIDSLQELQEQQEHQQQQRQLSKPLNLNSYEDNMEYRSLGKLLVIIPCYIITIYILGFISIGAYIAGSESARSIMKANGVNGWWWSLFHTFSAFNNAGLALFSDSLIQINEKYFLLITLSILIFLGNTLFPVFLRIILLVVSKFTKDPEPYRNLLENPRSIFTHLFPYKETVQLFVIWCIFNVSQIALMALLDVNDKAFTNMNYGTILLNYYFSSISTRTCGFNSVDLNLLSESVLLLFVGLMFVSSYPFIISLRRSAVNNKYSNQSREVMKEVLIRDIFVPYICILFIAIFESQLLESGVITVFQILFEAISAFGNVGLSISITLSTYSKLVFIALMLAGKHRQLPESVDESVNPALLKKNAVISKIITRYKRRKL.

The helical transmembrane segment at 48-68 threads the bilayer; it reads LFLLVILVQLGSTVLLTLPIV. Residue Asn81 is glycosylated (N-linked (GlcNAc...) asparagine). 2 disordered regions span residues 106-145 and 223-261; these read HDFK…DDND and QQQQ…DSQS. Residues 110 to 129 are compositionally biased toward acidic residues; that stretch reads DDDDENDNNNNEENDDNDDE. Positions 199–227 form a coiled coil; sequence IIQQQQQQQQQQQQQQQQQQQQQQQQQQQ. N-linked (GlcNAc...) asparagine glycosylation is found at Asn239, Asn243, Asn247, Asn248, Asn254, and Asn257. Helical transmembrane passes span 313-333, 353-373, 385-405, 443-463, 472-491, and 505-525; these read LLVI…ISIG, GWWW…LALF, FLLI…PVFL, VQLF…MALL, NMNY…STRT, and SVLL…IISL. N-linked (GlcNAc...) asparagine glycosylation occurs at Asn536. The next 3 membrane-spanning stretches (helical) occupy residues 550–570, 571–591, and 592–612; these read IFVP…LLES, GVIT…NVGL, and SISI…MLAG.

Belongs to the TrkH potassium transport family.

Its subcellular location is the membrane. May function as a potassium transporter. The sequence is that of Putative potassium transport protein DDB_G0292412 from Dictyostelium discoideum (Social amoeba).